Consider the following 391-residue polypeptide: CBS domain-containing protein CBSX5 (391 aa).

CBS domains are found at residues 16–81 (GKPP…DHDH) and 331–391 (MARK…ENDM).

This chain is CBS domain-containing protein CBSX5 (CBSX5), found in Arabidopsis thaliana (Mouse-ear cress).